We begin with the raw amino-acid sequence, 638 residues long: Stress-activated protein kinase alpha (638 aa).

ANK repeat units follow at residues 43–72, 80–109, 113–146, 150–181, 185–214, and 219–248; these read YGQSALTIALKNNNEEMVELLLSLCVTLKA, NGFSALHQAVSSDDRILMRVLQYENINVDV, DLNTPIHYFCQKFRSPNCQEPFQLFIQKGVNVNA, NGETPLHKAIFNNSVRLMMVGLLLKNGANVNL, FQESPLHYAVRLGREDLVSVLLKAGADVDC, and ERKTPYQLAVEEGNKDMTARIKKYKDLFDW. The 64-residue stretch at 240–303 folds into the SAM domain; it reads KKYKDLFDWL…LKETSNLANE (64 aa). Residues 351–620 enclose the Protein kinase domain; the sequence is LEYTEKLGAG…RLVTIENEYR (270 aa). Residues 357–365 and Lys-378 each bind ATP; that span reads LGAGSSGKV. The active-site Proton acceptor is the Asp-472.

Belongs to the protein kinase superfamily. TKL Ser/Thr protein kinase family. In terms of assembly, interacts with F-actin. In terms of processing, autophosphorylated.

The protein localises to the cytoplasm. The protein resides in the cytoskeleton. The enzyme catalyses L-seryl-[protein] + ATP = O-phospho-L-seryl-[protein] + ADP + H(+). The catalysed reaction is L-threonyl-[protein] + ATP = O-phospho-L-threonyl-[protein] + ADP + H(+). May be involved in cortical F-actin organization and resistance to osmotic stress. Activated upon cell detachment, in vitro. The chain is Stress-activated protein kinase alpha (spkA-1) from Dictyostelium discoideum (Social amoeba).